Consider the following 241-residue polypeptide: RAD9, HUS1, RAD1-interacting nuclear orphan protein 1 (241 aa).

Positions 1–10 (MPPRKKRRQA) are enriched in basic residues. Residues 1-27 (MPPRKKRRQAAQKPQLLFHQQPLEAPK) form a disordered region. The short motif at 56–62 (SWVSPQF) is the RAD1-binding motif element. Disordered stretches follow at residues 68 to 134 (SWFP…PLVP) and 157 to 204 (IPPD…LVTD). The segment covering 72 to 87 (GKRKHHHRDHARRSSR) has biased composition (basic residues). Over residues 100–110 (ETPQSSASSAT) the composition is skewed to polar residues. A D-box motif is present at residues 129 to 136 (GRPLVPML). Residues 177 to 181 (LRENS) carry the KEN box motif. Residues 181–193 (SLPSCSLHTSTPK) show a composition bias toward polar residues.

As to quaternary structure, interacts (when phosphorylated by PLK1) with POLQ; promoting POLQ recruitment to DNA damage sites. Interacts with RAD1; interaction is direct and promotes association with the 9-1-1 (RAD9-RAD1-HUS1) complex. Interacts with RAD18. Interacts with TOPBP1. Interacts with UBE2N. Phosphorylated by PLK1, promoting interaction with polymerase theta (POLQ). Post-translationally, ubiquitinated and degraded by the APC/C complex upon mitotic exit.

Its subcellular location is the nucleus. The protein resides in the chromosome. In terms of biological role, involved in microhomology-mediated end-joining (MMEJ) DNA repair by promoting recruitment of polymerase theta (POLQ) to DNA damage sites during mitosis. MMEJ is an alternative non-homologous end-joining (NHEJ) machinery that takes place during mitosis to repair double-strand breaks in DNA that originate in S-phase. Accumulates in M-phase; following phosphorylation by PLK1, interacts with POLQ, enabling its recruitment to double-strand breaks for subsequent repair. Also involved in the DNA damage response (DDR) signaling in response to genotoxic stresses such as ionizing radiation (IR) during the S phase. Recruited to sites of DNA damage through interaction with the 9-1-1 cell-cycle checkpoint response complex and TOPBP1 in a ATR-dependent manner. Required for the progression of the G1 to S phase transition. Plays a role in the stimulation of CHEK1 phosphorylation. The sequence is that of RAD9, HUS1, RAD1-interacting nuclear orphan protein 1 (RHNO1) from Bos taurus (Bovine).